We begin with the raw amino-acid sequence, 249 residues long: Probable transcriptional regulatory protein MXAN_4974 (249 aa).

The protein belongs to the TACO1 family.

Its subcellular location is the cytoplasm. This is Probable transcriptional regulatory protein MXAN_4974 from Myxococcus xanthus (strain DK1622).